The sequence spans 1159 residues: Ferroxidase HEPHL1 (1159 aa).

Residues 1–23 form the signal peptide; the sequence is MFLKQPGGCILLQFLGLLGLVGA. 6 consecutive Plastocyanin-like domains span residues 24 to 206, 217 to 365, 378 to 560, 570 to 718, 730 to 906, and 914 to 1092; these read VTRT…LLVC, MRTD…VGNC, QRRY…LLVC, TQKG…ISSC, MLRT…LITC, and KGRR…VPSQ. Over 24–1114 the chain is Extracellular; the sequence is VTRTYYIGIV…KNLRPRGAKA (1091 aa). Cu cation is bound by residues His-126 and His-128. A glycan (N-linked (GlcNAc...) asparagine) is linked at Asn-160. Cys-180 and Cys-206 are oxidised to a cystine. His-186 and His-188 together coordinate Cu cation. Residue Asn-235 is glycosylated (N-linked (GlcNAc...) asparagine). Cys-284 and Cys-365 form a disulfide bridge. Positions 303, 346, and 351 each coordinate Cu cation. Residue Asn-406 is glycosylated (N-linked (GlcNAc...) asparagine). A disulfide bond links Cys-534 and Cys-560. Residue Asn-588 is glycosylated (N-linked (GlcNAc...) asparagine). A disulfide bridge links Cys-637 with Cys-718. Residues His-656, Cys-699, His-704, and Met-709 each coordinate Cu cation. N-linked (GlcNAc...) asparagine glycosylation occurs at Asn-771. Cys-880 and Cys-906 are oxidised to a cystine. N-linked (GlcNAc...) asparagine glycosylation is present at Asn-934. Cu cation contacts are provided by His-1002, His-1005, His-1007, His-1047, Cys-1048, His-1049, His-1053, and Met-1058. Residues 1115–1135 form a helical membrane-spanning segment; the sequence is ALVILFILGLLLLVATVVLAL. Topologically, residues 1136-1159 are cytoplasmic; the sequence is RLRSSRRQMAYREVQSCALPTDAL.

The protein belongs to the multicopper oxidase family. Cu cation serves as cofactor.

It localises to the membrane. The enzyme catalyses 4 Fe(2+) + O2 + 4 H(+) = 4 Fe(3+) + 2 H2O. Is a copper-binding glycoprotein with ferroxidase activity. It oxidizes Fe(2+) to Fe(3+) without releasing radical oxygen species. May be involved in the regulation of intracellular iron content. The polypeptide is Ferroxidase HEPHL1 (Hephl1) (Mus musculus (Mouse)).